A 445-amino-acid chain; its full sequence is Argininosuccinate synthase (445 aa).

ATP-binding positions include 17–25 (AFSGGLDTS) and alanine 43. Tyrosine 99 contributes to the L-citrulline binding site. ATP contacts are provided by glycine 129 and threonine 131. 3 residues coordinate L-aspartate: threonine 131, asparagine 135, and aspartate 136. Asparagine 135 contacts L-citrulline. Aspartate 136 is a binding site for ATP. L-citrulline-binding residues include arginine 139 and serine 192. Aspartate 194 provides a ligand contact to ATP. Residues threonine 201, glutamate 203, and glutamate 280 each contribute to the L-citrulline site.

The protein belongs to the argininosuccinate synthase family. Type 2 subfamily. As to quaternary structure, homotetramer.

Its subcellular location is the cytoplasm. It catalyses the reaction L-citrulline + L-aspartate + ATP = 2-(N(omega)-L-arginino)succinate + AMP + diphosphate + H(+). The protein operates within amino-acid biosynthesis; L-arginine biosynthesis; L-arginine from L-ornithine and carbamoyl phosphate: step 2/3. In Bordetella bronchiseptica (strain ATCC BAA-588 / NCTC 13252 / RB50) (Alcaligenes bronchisepticus), this protein is Argininosuccinate synthase.